The following is a 1189-amino-acid chain: Ras-specific guanine nucleotide-releasing factor 2 (1189 aa).

The PH 1 domain occupies 22 to 133 (EGTKRGFLSK…WMEAIHQASY (112 aa)). Residues 158–193 (KIATNQLRHQLEDQDTEIERLKSEIVALNKTKERMR) are a coiled coil. The IQ domain maps to 205-234 (DIKKIKKVQSFMRGWLCRRKWKTIVQDYIC). One can recognise a DH domain in the interval 243-429 (KRNQIVFTMV…EELSRVMHDE (187 aa)). The 119-residue stretch at 470–588 (PSVERGKLSK…WMSDISQCVD (119 aa)) folds into the PH 2 domain. The N-terminal Ras-GEF domain maps to 635-755 (KVPQIRYASV…LTSSLNSRIG (121 aa)). Residues 713 to 738 (VDGKSPRLCRKFSSPPPLAVSRTSSP) form a disordered region. 2 positions are modified to phosphoserine: Ser-725 and Ser-726. Ser-736 is subject to Phosphoserine; by CDK5. The segment at 743-751 (KLSLTSSLN) is regulates proteasomal degradation. 2 positions are modified to phosphoserine: Ser-745 and Ser-749. The tract at residues 757–817 (LDLTNSSSSS…TPRHLRYRQP (61 aa)) is disordered. Over residues 762-776 (SSSSSSPTTTTHSPA) the composition is skewed to low complexity. Residues Ser-801, Ser-805, and Ser-924 each carry the phosphoserine modification. Residues 954-1186 (SAMELAEQIT…YELSLKIEPR (233 aa)) enclose the Ras-GEF domain. Positions 1051-1080 (ALNRSAIYRLKKTWAKVSKQTKALMDKLQK) are responsible of the affinity for farnesylated versus geranylgeranylated Ras.

In terms of assembly, homooligomer and heterooligomer with RASGRF1. Interacts with Ras and RAC1. Interacts in a calcium-dependent manner with calmodulin. Interacts with EPB49 and probably CDK5R1. Interacts with the AMPA receptor through GRIA1. Interacts with microtubules. In terms of processing, phosphorylated by CDK5; down-regulates RASGRF2-mediated RAC1 activation. Post-translationally, ubiquitinated upon interaction with Ras. Ubiquitination leads to degradation through the 26S proteasome. Expressed in brain in the nucleus of the solitary tract. Not observed in the hippocampus (at protein level).

It is found in the cytoplasm. It localises to the cell membrane. The protein localises to the endoplasmic reticulum membrane. Functions as a calcium-regulated nucleotide exchange factor activating both Ras and RAC1 through the exchange of bound GDP for GTP. Preferentially activates HRAS in vivo compared to RRAS based on their different types of prenylation. Functions in synaptic plasticity by contributing to the induction of long term potentiation. In Mus musculus (Mouse), this protein is Ras-specific guanine nucleotide-releasing factor 2 (Rasgrf2).